A 44-amino-acid polypeptide reads, in one-letter code: Photosystem I reaction center subunit IX (44 aa).

The chain crosses the membrane as a helical span at residues Y7–I27.

It belongs to the PsaJ family.

It is found in the plastid. The protein localises to the chloroplast thylakoid membrane. In terms of biological role, may help in the organization of the PsaE and PsaF subunits. This is Photosystem I reaction center subunit IX from Lotus japonicus (Lotus corniculatus var. japonicus).